The primary structure comprises 493 residues: Amphoterin-induced protein 1 (493 aa).

The N-terminal stretch at 1 to 27 is a signal peptide; sequence MQPQRDLRGLWLLLLSLFLLLFEVARA. One can recognise an LRRNT domain in the interval 28-61; the sequence is GRPVVSCPANCLCASNILSCSKQQLPNVPQSLPG. The Extracellular portion of the chain corresponds to 28–372; sequence GRPVVSCPAN…LHGHHDTLNT (345 aa). Intrachain disulfides connect Cys34/Cys40 and Cys38/Cys47. LRR repeat units follow at residues 62-83, 87-108, 111-132, 135-156, 159-179, and 186-206; these read YTALLDLSHNNLSRLKAEWTPT, NLHSLLLSHNHLNFISSEAFVP, NLRYLDLSSNHLHTLDEFLFSG, ALEVLLLYNNHIVVVDRNAFED, QLQKLYLSQNMISRFPLELIK, and KLTLLDLSSNKLKKLPLTDLQ. Asn72 carries an N-linked (GlcNAc...) asparagine glycan. The LRRCT domain occupies 221-272; sequence NPLECDCKLYQLFSHWQYRQLSSVMDFQEDLYCVHSKKLHNVFSLDFFNCSE. Disulfide bonds link Cys225–Cys253, Cys227–Cys270, and Cys290–Cys341. Residues Asn269, Asn315, Asn349, and Asn360 are each glycosylated (N-linked (GlcNAc...) asparagine). Positions 269-353 constitute an Ig-like C2-type domain; the sequence is NCSEYKESAW…MGETFNETLS (85 aa). Residues 373-393 traverse the membrane as a helical segment; that stretch reads AYTTLVGCILSVVLVLIYLYL. Residues 394-493 lie on the Cytoplasmic side of the membrane; it reads TPCRCWCRGV…SVFSDTPIVV (100 aa). Residues 405-493 form a disordered region; sequence KPSSHQGDSL…SVFSDTPIVV (89 aa). Polar residues predominate over residues 408–424; sequence SHQGDSLSSSMLSTTPN. Residues 431 to 442 are compositionally biased toward basic and acidic residues; sequence GDKDDGFDRRVA. A phosphoserine mark is found at Ser477 and Ser481.

This sequence belongs to the immunoglobulin superfamily. AMIGO family. As to quaternary structure, homodimer, and heterodimer with AMIGO2 and AMIGO3. Interacts with KCNB1.

It is found in the cell membrane. Its subcellular location is the perikaryon. The protein resides in the cell projection. The protein localises to the dendrite. It localises to the axon. Functionally, promotes growth and fasciculation of neurites from cultured hippocampal neurons. May be involved in fasciculation as well as myelination of developing neural axons. May have a role in regeneration as well as neural plasticity in the adult nervous system. May mediate homophilic as well as heterophilic cell-cell interaction and contribute to signal transduction through its intracellular domain. Assembled with KCNB1 modulates the gating characteristics of the delayed rectifier voltage-dependent potassium channel KCNB1. The sequence is that of Amphoterin-induced protein 1 from Rattus norvegicus (Rat).